We begin with the raw amino-acid sequence, 341 residues long: Biotin synthase (341 aa).

A Radical SAM core domain is found at 43-266 (SEIQLSQLLS…IAVARIVCPK (224 aa)). Positions 58, 62, and 65 each coordinate [4Fe-4S] cluster. [2Fe-2S] cluster is bound by residues Cys102, Cys133, Cys193, and Arg270.

This sequence belongs to the radical SAM superfamily. Biotin synthase family. In terms of assembly, homodimer. Requires [4Fe-4S] cluster as cofactor. [2Fe-2S] cluster is required as a cofactor.

The enzyme catalyses (4R,5S)-dethiobiotin + (sulfur carrier)-SH + 2 reduced [2Fe-2S]-[ferredoxin] + 2 S-adenosyl-L-methionine = (sulfur carrier)-H + biotin + 2 5'-deoxyadenosine + 2 L-methionine + 2 oxidized [2Fe-2S]-[ferredoxin]. The protein operates within cofactor biosynthesis; biotin biosynthesis; biotin from 7,8-diaminononanoate: step 2/2. Functionally, catalyzes the conversion of dethiobiotin (DTB) to biotin by the insertion of a sulfur atom into dethiobiotin via a radical-based mechanism. This Caulobacter vibrioides (strain ATCC 19089 / CIP 103742 / CB 15) (Caulobacter crescentus) protein is Biotin synthase.